We begin with the raw amino-acid sequence, 131 residues long: D-ribose pyranase (131 aa).

The active-site Proton donor is H20. Substrate is bound by residues D28, H98, and 120-122 (YSN).

Belongs to the RbsD / FucU family. RbsD subfamily. As to quaternary structure, homodecamer.

It is found in the cytoplasm. The catalysed reaction is beta-D-ribopyranose = beta-D-ribofuranose. The protein operates within carbohydrate metabolism; D-ribose degradation; D-ribose 5-phosphate from beta-D-ribopyranose: step 1/2. Catalyzes the interconversion of beta-pyran and beta-furan forms of D-ribose. The chain is D-ribose pyranase from Latilactobacillus sakei subsp. sakei (strain 23K) (Lactobacillus sakei subsp. sakei).